The primary structure comprises 266 residues: GATA zinc finger domain-containing protein 1 (266 aa).

The segment at 9 to 33 (CSMCKTTSSSMWKKSPQGEILCHHC) adopts a GATA-type zinc-finger fold. Positions 59 to 72 (TTTFATTSAGPSQS) are enriched in low complexity. The disordered stretch occupies residues 59-112 (TTTFATTSAGPSQSNGGGGGKQSKQEIHRRSARLRNTKYKSAPAAEKKVSTKGK). Residue lysine 259 forms a Glycyl lysine isopeptide (Lys-Gly) (interchain with G-Cter in SUMO2) linkage.

As to quaternary structure, component of a chromatin complex, at least composed of KDM5A, GATAD1 and EMSY. Expressed in the eye (lens, ciliary body, retina, sclera and conjunctiva) at postnatal day 2 and 10. Not detected anywhere at postnatal day 14.

It is found in the nucleus. Functionally, component of some chromatin complex recruited to chromatin sites methylated 'Lys-4' of histone H3 (H3K4me), with a preference for trimethylated form (H3K4me3). In Mus musculus (Mouse), this protein is GATA zinc finger domain-containing protein 1 (Gatad1).